A 355-amino-acid polypeptide reads, in one-letter code: Uroporphyrinogen decarboxylase (355 aa).

Residues 27–31 (RQAGR), Asp78, Tyr155, Thr210, and His328 each bind substrate.

The protein belongs to the uroporphyrinogen decarboxylase family. Homodimer.

Its subcellular location is the cytoplasm. The catalysed reaction is uroporphyrinogen III + 4 H(+) = coproporphyrinogen III + 4 CO2. It functions in the pathway porphyrin-containing compound metabolism; protoporphyrin-IX biosynthesis; coproporphyrinogen-III from 5-aminolevulinate: step 4/4. Catalyzes the decarboxylation of four acetate groups of uroporphyrinogen-III to yield coproporphyrinogen-III. The chain is Uroporphyrinogen decarboxylase from Pseudomonas fluorescens (strain SBW25).